The sequence spans 548 residues: Chaperonin GroEL (548 aa).

ATP is bound by residues 30–33, lysine 51, 87–91, glycine 415, 479–481, and aspartate 495; these read TLGP, DGTTT, and NAA.

It belongs to the chaperonin (HSP60) family. As to quaternary structure, forms a cylinder of 14 subunits composed of two heptameric rings stacked back-to-back. Interacts with the co-chaperonin GroES.

The protein localises to the cytoplasm. It carries out the reaction ATP + H2O + a folded polypeptide = ADP + phosphate + an unfolded polypeptide.. Its function is as follows. Together with its co-chaperonin GroES, plays an essential role in assisting protein folding. The GroEL-GroES system forms a nano-cage that allows encapsulation of the non-native substrate proteins and provides a physical environment optimized to promote and accelerate protein folding. In Klebsiella pneumoniae subsp. pneumoniae (strain ATCC 700721 / MGH 78578), this protein is Chaperonin GroEL.